A 1620-amino-acid polypeptide reads, in one-letter code: Putative zinc carboxypeptidase (1620 aa).

At 1–1367 the chain is on the extracellular side; it reads MLFKNEDSGN…SYDFLYFDEN (1367 aa). A glycan (N-linked (GlcNAc...) asparagine) is linked at N19. The segment at 32–74 is disordered; the sequence is RNDNKNNDNEDNKQDDEEKNDEDDNKSNLLLEENEENKRQGDK. The span at 33 to 43 shows a compositional bias: basic and acidic residues; the sequence is NDNKNNDNEDN. The span at 44 to 55 shows a compositional bias: acidic residues; sequence KQDDEEKNDEDD. N-linked (GlcNAc...) asparagine glycans are attached at residues N56 and N102. A disordered region spans residues 309 to 328; that stretch reads GNHYDAHESTNTYDEEKTRE. N-linked (GlcNAc...) asparagine glycans are attached at residues N354, N487, N508, N529, N550, N571, N589, N687, N802, and N1010. The tract at residues 497–559 is possible malaria epitope; the sequence is VNNLDSTVNY…NSTGNNINNI (63 aa). The Peptidase M14 domain maps to 1004–1261; the sequence is GENKKNNGTK…FYVQNYFEGY (258 aa). H1059 and E1062 together coordinate Zn(2+). 2 N-linked (GlcNAc...) asparagine glycosylation sites follow: N1064 and N1141. A Zn(2+)-binding site is contributed by H1155. The active-site Proton donor/acceptor is E1229. Residues 1279–1329 form a disordered region; the sequence is NIKGDDNINGDDNIKGGDNIKGDDNIKRDDNFQRDDNFQRDDNFQRGDNFH. A helical transmembrane segment spans residues 1368 to 1388; the sequence is LLFMTGVSFGICLFKFINFLS. The Cytoplasmic portion of the chain corresponds to 1389–1620; sequence YHKSSICRRT…SKRKKVIVIL (232 aa). The interval 1560-1620 is disordered; it reads PNGKYKGPGF…SKRKKVIVIL (61 aa). The segment covering 1581–1597 has biased composition (basic and acidic residues); it reads NKNESKTEKKSKTENKS. The span at 1598 to 1620 shows a compositional bias: basic residues; sequence KSKSKNKSKSKNKSKRKKVIVIL.

Belongs to the peptidase M14 family. Requires Zn(2+) as cofactor.

It is found in the membrane. This Plasmodium falciparum (isolate 3D7) protein is Putative zinc carboxypeptidase.